Here is a 535-residue protein sequence, read N- to C-terminus: EGF domain-specific O-linked N-acetylglucosamine transferase (535 aa).

An N-terminal signal peptide occupies residues 1-16 (MFILLMFVLLLQEILA). 2 N-linked (GlcNAc...) asparagine glycosylation sites follow: N22 and N271. Residues 303-305 (DYD) carry the Required for optimal activity motif. N362 and N501 each carry an N-linked (GlcNAc...) asparagine glycan.

It belongs to the glycosyltransferase 61 family.

The protein resides in the endoplasmic reticulum lumen. The enzyme catalyses L-seryl-[protein] + UDP-N-acetyl-alpha-D-glucosamine = 3-O-(N-acetyl-beta-D-glucosaminyl)-L-seryl-[protein] + UDP + H(+). It catalyses the reaction L-threonyl-[protein] + UDP-N-acetyl-alpha-D-glucosamine = 3-O-(N-acetyl-beta-D-glucosaminyl)-L-threonyl-[protein] + UDP + H(+). Functionally, catalyzes the transfer of a single N-acetylglucosamine from UDP-GlcNAc to a serine or threonine residue in extracellular proteins resulting in their modification with a beta-linked N-acetylglucosamine (O-GlcNAc). Specifically glycosylates the Thr residue located between the fifth and sixth conserved cysteines of folded EGF-like domains. In Gallus gallus (Chicken), this protein is EGF domain-specific O-linked N-acetylglucosamine transferase (EOGT).